Consider the following 269-residue polypeptide: Putative phosphatase M6_Spy0533 (269 aa).

D9 serves as the catalytic Nucleophile. A Mg(2+)-binding site is contributed by D9. I10 lines the phosphate pocket. D11 is a Mg(2+) binding site. Residues 43 to 44 and K196 each bind phosphate; that span reads TG. D219 contacts Mg(2+). Residue N222 coordinates phosphate.

Requires Mg(2+) as cofactor.

The sequence is that of Putative phosphatase M6_Spy0533 from Streptococcus pyogenes serotype M6 (strain ATCC BAA-946 / MGAS10394).